Reading from the N-terminus, the 23-residue chain is NADH-ubiquinone oxidoreductase 29 kDa subunit (23 aa).

In terms of assembly, complex I is composed of about 45 different subunits.

The protein resides in the mitochondrion inner membrane. It catalyses the reaction a ubiquinone + NADH + 5 H(+)(in) = a ubiquinol + NAD(+) + 4 H(+)(out). In terms of biological role, transfer of electrons from NADH to the respiratory chain. The immediate electron acceptor for the enzyme is believed to be ubiquinone. The protein is NADH-ubiquinone oxidoreductase 29 kDa subunit of Solanum tuberosum (Potato).